The primary structure comprises 180 residues: Adenine phosphoribosyltransferase (180 aa).

Ala-2 carries the N-acetylalanine modification. Phosphoserine occurs at positions 4, 15, and 30. At Tyr-60 the chain carries Phosphotyrosine. Ser-66 bears the Phosphoserine mark. Lys-114 is subject to N6-acetyllysine. Thr-135 carries the post-translational modification Phosphothreonine.

It belongs to the purine/pyrimidine phosphoribosyltransferase family. Homodimer.

The protein resides in the cytoplasm. The catalysed reaction is AMP + diphosphate = 5-phospho-alpha-D-ribose 1-diphosphate + adenine. Its pathway is purine metabolism; AMP biosynthesis via salvage pathway; AMP from adenine: step 1/1. Functionally, catalyzes a salvage reaction resulting in the formation of AMP, that is energically less costly than de novo synthesis. This Cricetulus griseus (Chinese hamster) protein is Adenine phosphoribosyltransferase.